The sequence spans 355 residues: 3-dehydroquinate synthase (355 aa).

NAD(+) contacts are provided by residues 71 to 76, 105 to 109, 129 to 130, Lys-142, and Lys-151; these read EGEASK, GVVGD, and TS. Positions 184, 246, and 263 each coordinate Zn(2+).

The protein belongs to the sugar phosphate cyclases superfamily. Dehydroquinate synthase family. Co(2+) is required as a cofactor. It depends on Zn(2+) as a cofactor. The cofactor is NAD(+).

Its subcellular location is the cytoplasm. The enzyme catalyses 7-phospho-2-dehydro-3-deoxy-D-arabino-heptonate = 3-dehydroquinate + phosphate. It functions in the pathway metabolic intermediate biosynthesis; chorismate biosynthesis; chorismate from D-erythrose 4-phosphate and phosphoenolpyruvate: step 2/7. Catalyzes the conversion of 3-deoxy-D-arabino-heptulosonate 7-phosphate (DAHP) to dehydroquinate (DHQ). The polypeptide is 3-dehydroquinate synthase (Streptococcus thermophilus (strain ATCC BAA-491 / LMD-9)).